Here is an 80-residue protein sequence, read N- to C-terminus: U19-lycotoxin-Ls1a (80 aa).

A signal peptide spans 1 to 22 (MSPKVQALIFIVGLITLLAAHA). Positions 23–34 (QEELSDNIESER) are excised as a propeptide. 4 disulfides stabilise this stretch: cysteine 36–cysteine 50, cysteine 43–cysteine 55, cysteine 49–cysteine 66, and cysteine 57–cysteine 64.

This sequence belongs to the neurotoxin 02 (plectoxin) family. 05 (U19-lycotoxin) subfamily. In terms of tissue distribution, expressed by the venom gland.

It localises to the secreted. The polypeptide is U19-lycotoxin-Ls1a (Lycosa singoriensis (Wolf spider)).